Consider the following 88-residue polypeptide: Small capsomere-interacting protein (88 aa).

The interval 1–30 (MTTIRSDDLSNQITQISGSSKKEEEKKKQQ) is disordered. Over residues 9-19 (LSNQITQISGS) the composition is skewed to polar residues.

It belongs to the herpesviridae small capsomere-interacting protein family. Interacts with the major capsid protein/MCP.

It localises to the virion. The protein localises to the host nucleus. Functionally, participates in the assembly of the infectious particles by decorating the outer surface of the capsid shell and thus forming a layer between the capsid and the tegument. Complexes composed of the major capsid protein and small capsomere-interacting protein/SCP assemble together in the host cytoplasm and are translocated to the nucleus, where they accumulate and participate in capsid assembly. This is Small capsomere-interacting protein from Human herpesvirus 6A (strain Uganda-1102) (HHV-6 variant A).